A 421-amino-acid polypeptide reads, in one-letter code: Myb-related protein Pp2 (421 aa).

HTH myb-type domains follow at residues 9–61 (KVGL…TNYL) and 62–116 (RPDL…KKRL). 2 consecutive DNA-binding regions (H-T-H motif) follow at residues 37–61 (WRAIPKLAGLLRCGKSCRLRWTNYL) and 89–112 (WSRIAAQLPGRTDNEIKNYWNTRL). Residues 119–240 (QGLDPNTHLP…VTTKSHEDHR (122 aa)) form a disordered region. Residues 136–147 (DTEDDTDDEGGD) show a composition bias toward acidic residues.

The protein localises to the nucleus. Functionally, possible transcription activator. The protein is Myb-related protein Pp2 (PP2) of Physcomitrium patens (Spreading-leaved earth moss).